The primary structure comprises 353 residues: Paraxanthine methyltransferase 2 (353 aa).

Y18 is a binding site for S-adenosyl-L-methionine. Substrate contacts are provided by residues Y18 and 21–25 (QSSYQ). Residues G59, 59–60 (GC), N65, 99–102 (FNDL), 128–130 (SFF), and 145–147 (SYA) each bind S-adenosyl-L-methionine. A substrate-binding site is contributed by 146 to 150 (YAFLF). The Mg(2+) site is built by N167, D252, and F254. Substrate-binding residues include S301 and Y306.

It belongs to the methyltransferase superfamily. SABATH family. In terms of assembly, homodimer. It depends on Mg(2+) as a cofactor.

This is Paraxanthine methyltransferase 2 from Arabidopsis thaliana (Mouse-ear cress).